The primary structure comprises 93 residues: Ribonuclease P protein component 1 (93 aa).

Belongs to the eukaryotic/archaeal RNase P protein component 1 family. In terms of assembly, consists of a catalytic RNA component and at least 4-5 protein subunits.

The protein localises to the cytoplasm. It carries out the reaction Endonucleolytic cleavage of RNA, removing 5'-extranucleotides from tRNA precursor.. Functionally, part of ribonuclease P, a protein complex that generates mature tRNA molecules by cleaving their 5'-ends. The sequence is that of Ribonuclease P protein component 1 from Methanothermobacter thermautotrophicus (strain ATCC 29096 / DSM 1053 / JCM 10044 / NBRC 100330 / Delta H) (Methanobacterium thermoautotrophicum).